The chain runs to 358 residues: Protein FAM187B (358 aa).

The N-terminal stretch at 1–17 (MLATLWLVGLSLPMLWA) is a signal peptide. Topologically, residues 18–322 (QRLISCPYKN…DKADSVLRRL (305 aa)) are extracellular. N-linked (GlcNAc...) asparagine glycosylation is present at asparagine 127. The helical transmembrane segment at 323–343 (KLMVLSISVLAVGGLLCKVVF) threads the bilayer. At 344–358 (RPVCGKKRSQVLLVK) the chain is on the cytoplasmic side.

This sequence belongs to the FAM187 family.

It localises to the membrane. This Mus musculus (Mouse) protein is Protein FAM187B (Fam187b).